We begin with the raw amino-acid sequence, 289 residues long: Glucosamine-6-phosphate deaminase 1 (289 aa).

At K64 the chain carries N6-acetyllysine. D72 serves as the catalytic Proton acceptor; for enolization step. D141 acts as the For ring-opening step in catalysis. H143 functions as the Proton acceptor; for ring-opening step in the catalytic mechanism. The active-site For ring-opening step is E148. T161 bears the Phosphothreonine mark.

It belongs to the glucosamine/galactosamine-6-phosphate isomerase family. As to quaternary structure, homohexamer. In terms of tissue distribution, at the equatorial segment of the sperm head.

It localises to the cytoplasm. The catalysed reaction is alpha-D-glucosamine 6-phosphate + H2O = beta-D-fructose 6-phosphate + NH4(+). Its pathway is nucleotide-sugar biosynthesis; UDP-N-acetyl-alpha-D-glucosamine biosynthesis; alpha-D-glucosamine 6-phosphate from D-fructose 6-phosphate: step 1/1. Its activity is regulated as follows. Allosterically activated by N-acetylglucosamine-6-phosphate (GlcNAc6P). In terms of biological role, catalyzes the reversible conversion of alpha-D-glucosamine 6-phosphate (GlcN-6P) into beta-D-fructose 6-phosphate (Fru-6P) and ammonium ion, a regulatory reaction step in de novo uridine diphosphate-N-acetyl-alpha-D-glucosamine (UDP-GlcNAc) biosynthesis via hexosamine pathway. Deamination is coupled to aldo-keto isomerization mediating the metabolic flux from UDP-GlcNAc toward Fru-6P. At high ammonium level can drive amination and isomerization of Fru-6P toward hexosamines and UDP-GlcNAc synthesis. Has a role in fine tuning the metabolic fluctuations of cytosolic UDP-GlcNAc and their effects on hyaluronan synthesis that occur during tissue remodeling. Seems to trigger calcium oscillations in mammalian eggs. These oscillations serve as the essential trigger for egg activation and early development of the embryo. The chain is Glucosamine-6-phosphate deaminase 1 from Mesocricetus auratus (Golden hamster).